The chain runs to 240 residues: UDP-2,3-diacylglucosamine hydrolase (240 aa).

The Mn(2+) site is built by D9, H11, D43, N81, and H116. N81–R82 contributes to the substrate binding site. D124, S162, K166, K169, and H197 together coordinate substrate. Mn(2+)-binding residues include H197 and H199.

This sequence belongs to the LpxH family. Mn(2+) serves as cofactor.

The protein resides in the cell inner membrane. The enzyme catalyses UDP-2-N,3-O-bis[(3R)-3-hydroxytetradecanoyl]-alpha-D-glucosamine + H2O = 2-N,3-O-bis[(3R)-3-hydroxytetradecanoyl]-alpha-D-glucosaminyl 1-phosphate + UMP + 2 H(+). Its pathway is glycolipid biosynthesis; lipid IV(A) biosynthesis; lipid IV(A) from (3R)-3-hydroxytetradecanoyl-[acyl-carrier-protein] and UDP-N-acetyl-alpha-D-glucosamine: step 4/6. Its function is as follows. Hydrolyzes the pyrophosphate bond of UDP-2,3-diacylglucosamine to yield 2,3-diacylglucosamine 1-phosphate (lipid X) and UMP by catalyzing the attack of water at the alpha-P atom. Involved in the biosynthesis of lipid A, a phosphorylated glycolipid that anchors the lipopolysaccharide to the outer membrane of the cell. This chain is UDP-2,3-diacylglucosamine hydrolase, found in Neisseria meningitidis serogroup B (strain ATCC BAA-335 / MC58).